A 122-amino-acid polypeptide reads, in one-letter code: Urease subunit beta (122 aa).

The segment at 102–122 (DGGTAVAGEPRPGIAAERDHQ) is disordered.

It belongs to the urease beta subunit family. As to quaternary structure, heterotrimer of UreA (gamma), UreB (beta) and UreC (alpha) subunits. Three heterotrimers associate to form the active enzyme.

It is found in the cytoplasm. It carries out the reaction urea + 2 H2O + H(+) = hydrogencarbonate + 2 NH4(+). It functions in the pathway nitrogen metabolism; urea degradation; CO(2) and NH(3) from urea (urease route): step 1/1. This is Urease subunit beta from Paenarthrobacter aurescens (strain TC1).